Reading from the N-terminus, the 942-residue chain is Inter alpha-trypsin inhibitor, heavy chain 4 (942 aa).

The signal sequence occupies residues 1–28; sequence MKSPAPAHMWNLVLFLPSLLAVLPTTTA. The region spanning 29 to 148 is the VIT domain; the sequence is EKNGIDIYSL…KITFELIYQE (120 aa). N81 carries N-linked (GlcNAc...) asparagine glycosylation. The region spanning 274-457 is the VWFA domain; the sequence is NVIFVIDKSG…LQLQDFYHEV (184 aa). N-linked (GlcNAc...) asparagine glycosylation is found at N517 and N577. Positions 552 to 586 form a coiled coil; the sequence is TIQQQLEQRISASGAELEALEAQVLNLSLKYNFVT. 2 disordered regions span residues 658–698 and 726–745; these read RQYI…SDFS and EKSKESTIPEESPNPDHPQV. Residues 663–690 are compositionally biased toward pro residues; sequence PGFPGPPGPPGFPAPPGPPGFPAPPGPP. O-linked (GalNAc...) threonine glycosylation is present at T732. An intrachain disulfide couples C761 to C937. The N-linked (GlcNAc...) asparagine glycan is linked to N874.

Belongs to the ITIH family. As to quaternary structure, interacts (via C-terminus) with DNAJC1 (via SANT 2 domain). Post-translationally, may be O-glycosylated. N-glycosylated. As to expression, highly expressed in liver. Weak expression in lung and heart.

It localises to the secreted. Type II acute-phase protein (APP) involved in inflammatory responses to trauma. May also play a role in liver development or regeneration. The sequence is that of Inter alpha-trypsin inhibitor, heavy chain 4 (Itih4) from Mus musculus (Mouse).